The following is a 757-amino-acid chain: Ecdysone receptor (757 aa).

The segment at 1–300 is modulating; it reads MMKRRWSNNG…GPAPRLQEEL (300 aa). Disordered stretches follow at residues 126 to 192 and 235 to 289; these read NSVG…GGGG and LNHH…KKIK. Gly residues predominate over residues 128-138; sequence VGGGGGGGGVP. Positions 167–183 are enriched in low complexity; sequence NSNSNHSNSSSHHTNGH. 2 consecutive NR C4-type zinc fingers follow at residues 301-321 and 337-361; these read CLVC…CEGC and CKFG…LKKC. A DNA-binding region (nuclear receptor) is located at residues 301–373; it reads CLVCGDRASG…VGMRPECVVP (73 aa). Residues 442-677 form the NR LBD domain; sequence NQLAVIYKLI…FLEEIWDVHA (236 aa). The segment covering 717–734 has biased composition (low complexity); sequence TSMATSSSSSLSPSAAST. A disordered region spans residues 717–739; that stretch reads TSMATSSSSSLSPSAASTPNGGA.

Belongs to the nuclear hormone receptor family. NR1 subfamily.

The protein resides in the nucleus. Its function is as follows. Receptor for ecdysone. Binds to ecdysone response elements (ECRES). This chain is Ecdysone receptor (EcR), found in Lucilia cuprina (Green bottle fly).